Here is a 107-residue protein sequence, read N- to C-terminus: Large ribosomal subunit protein uL24 (107 aa).

The protein belongs to the universal ribosomal protein uL24 family. In terms of assembly, part of the 50S ribosomal subunit.

Functionally, one of two assembly initiator proteins, it binds directly to the 5'-end of the 23S rRNA, where it nucleates assembly of the 50S subunit. Its function is as follows. One of the proteins that surrounds the polypeptide exit tunnel on the outside of the subunit. This is Large ribosomal subunit protein uL24 from Nitrosomonas eutropha (strain DSM 101675 / C91 / Nm57).